A 142-amino-acid chain; its full sequence is Large ribosomal subunit protein uL13 (142 aa).

Belongs to the universal ribosomal protein uL13 family. As to quaternary structure, part of the 50S ribosomal subunit.

In terms of biological role, this protein is one of the early assembly proteins of the 50S ribosomal subunit, although it is not seen to bind rRNA by itself. It is important during the early stages of 50S assembly. The protein is Large ribosomal subunit protein uL13 of Cellvibrio japonicus (strain Ueda107) (Pseudomonas fluorescens subsp. cellulosa).